A 351-amino-acid chain; its full sequence is UDP-N-acetylenolpyruvoylglucosamine reductase (351 aa).

One can recognise an FAD-binding PCMH-type domain in the interval H25–L196. R173 is an active-site residue. The active-site Proton donor is the S246. E343 is a catalytic residue.

The protein belongs to the MurB family. Requires FAD as cofactor.

The protein localises to the cytoplasm. It catalyses the reaction UDP-N-acetyl-alpha-D-muramate + NADP(+) = UDP-N-acetyl-3-O-(1-carboxyvinyl)-alpha-D-glucosamine + NADPH + H(+). The protein operates within cell wall biogenesis; peptidoglycan biosynthesis. In terms of biological role, cell wall formation. In Xylella fastidiosa (strain 9a5c), this protein is UDP-N-acetylenolpyruvoylglucosamine reductase.